A 341-amino-acid polypeptide reads, in one-letter code: GDT1-like protein 1, chloroplastic (341 aa).

A compositionally biased stretch (low complexity) spans 1 to 13 (MASVASSTVFASS). Disordered regions lie at residues 1–41 (MASV…GRSV) and 54–76 (VVTR…GGGR). The transit peptide at 1–57 (MASVASSTVFASSLPHHRATTRAPPTPPRIPRRARLPGRSVVSCLPKRGSEKLVVTR) directs the protein to the chloroplast. 7 helical membrane passes run 79–99 (PSLD…VLML), 117–137 (VVGD…LIFF), 158–178 (AIIF…SVVL), 203–223 (FLAA…AASG), 246–266 (GAGI…VFIA), 286–306 (LGVI…AVLG), and 318–338 (IVAY…LVEI).

This sequence belongs to the GDT1 family.

It localises to the plastid. The protein resides in the chloroplast membrane. The protein is GDT1-like protein 1, chloroplastic of Oryza sativa subsp. indica (Rice).